Reading from the N-terminus, the 269-residue chain is MGTIVDITVTKENAERFWIVIHRDNESALKLTVDQDVLLKFRLKKGMIIDDALLRDIVYADGIKKAYQQALYFLAHRMRSEQEIVEHLRKKGVVDPVIEEVLEKLRAERYVDDEAFAAAYVRTQKNTSTKGPRLIQAELERLGVPASVIEQSLVEYSFNEQVIAARSLYEKAKKQRRAESARAFLERVKQQLMRKGFSHEVIAIVLADGSGHTEEEEREALHVQAEKIRRRYAHHPRPLYEQKMRQALYRKGFSLALIDEWLRRQDDDG.

Belongs to the RecX family.

It is found in the cytoplasm. Modulates RecA activity. The polypeptide is Regulatory protein RecX (Geobacillus thermodenitrificans (strain NG80-2)).